A 318-amino-acid polypeptide reads, in one-letter code: Transaldolase (318 aa).

The active-site Schiff-base intermediate with substrate is Lys132.

The protein belongs to the transaldolase family. Type 1 subfamily. In terms of assembly, homodimer.

The protein resides in the cytoplasm. The enzyme catalyses D-sedoheptulose 7-phosphate + D-glyceraldehyde 3-phosphate = D-erythrose 4-phosphate + beta-D-fructose 6-phosphate. The protein operates within carbohydrate degradation; pentose phosphate pathway; D-glyceraldehyde 3-phosphate and beta-D-fructose 6-phosphate from D-ribose 5-phosphate and D-xylulose 5-phosphate (non-oxidative stage): step 2/3. Functionally, transaldolase is important for the balance of metabolites in the pentose-phosphate pathway. The protein is Transaldolase of Shewanella loihica (strain ATCC BAA-1088 / PV-4).